Reading from the N-terminus, the 78-residue chain is Protein SlyX homolog (78 aa).

The protein belongs to the SlyX family.

The protein is Protein SlyX homolog of Xylella fastidiosa (strain 9a5c).